Here is a 563-residue protein sequence, read N- to C-terminus: MLLLLVSVIVALALVAPAPETQEKRLQVAQAPNVVLVASDSFDGRLTFQPGSQVVKLPFINFMRARGTTFLNAYTNSPICCPSRAAMWSGLFTHLTESWNNFKGLDPNYTTWMDVMEKHGYQTQKFGKLDYSSGHHSISNRVEAWTRDVAFLLRQEGRPIINLIPDKNRRRVMDKDWQNTDKAIAWLRQVNSTKPFVLYLGLNLPHPYPSPSSGENFGSSTFHTSLYWLEKVAYDAIKIPKWLALSEMHPVDYYSSYTKNCTGKFTENEIKNIRAFYYAMCAETDAMLGEIILALHKLNLLQKTIVIYTSDHGEMAMEHRQFYKMSMYEASAHVPILMMGPGIKANLQVPSLVSLVDIYPTMLDIAGIPLPLNLSGYSLLPLSSNTSANDQAFRVHHPPWILSEFHGCNANASTYMLRTGQWKYIAYSDGTLVQPQLFDLSLDPDELTNIATEFPEITYSLDQQLRSVINYPKVSASVHRYNKEQFIMWKQSVAQNYSNYIAHLRWHQDWQKDPRKYENAIQRWLAIHSSPPTHSPLSLVHQWLTTHSSPIAVDNKKTFSSYT.

Residues Met-1–Pro-17 form the signal peptide. Ca(2+) is bound by residues Asp-40 and Cys-80. The Nucleophile role is filled by Cys-80. Cys-80 is modified (3-oxoalanine (Cys)). The N-linked (GlcNAc...) asparagine glycan is linked to Asn-108. Lys-128 contributes to the substrate binding site. Asn-191 carries an N-linked (GlcNAc...) asparagine glycan. Position 249 (His-249) interacts with substrate. A glycan (N-linked (GlcNAc...) asparagine) is linked at Asn-260. Positions 311 and 312 each coordinate Ca(2+). N-linked (GlcNAc...) asparagine glycans are attached at residues Asn-373, Asn-411, and Asn-496.

It belongs to the sulfatase family. Requires Ca(2+) as cofactor. The conversion to 3-oxoalanine (also known as C-formylglycine, FGly), of a serine or cysteine residue in prokaryotes and of a cysteine residue in eukaryotes, is critical for catalytic activity. Post-translationally, the 75-kDa precursor undergoes proteolytic processing to yield a 23 kDa form. In terms of processing, N-glycosylated with both high mannose and complex type sugars.

The protein localises to the secreted. The protein resides in the lysosome. The enzyme catalyses an aryl sulfate + H2O = a phenol + sulfate + H(+). It carries out the reaction Hydrolysis of the 2-sulfate groups of the 2-O-sulfo-D-glucuronate residues of chondroitin sulfate, heparin and heparitin sulfate.. Catalyzes the hydrolysis of pseudosubstrates such as p-nitrocatechol sulfate and p-nitrophenyl sulfate. Catalyzes the hydrolysis of the 2-sulfate groups of the 2-O-sulfo-D-glucuronate residues of chondroitin sulfate, heparin and heparitin sulfate. Acts selectively on 2-sulfoglucuronate and lacks activity against 2-sulfoiduronate. The sequence is that of Arylsulfatase K (Arsk) from Rattus norvegicus (Rat).